Reading from the N-terminus, the 232-residue chain is Ribonuclease 3 (232 aa).

One can recognise an RNase III domain in the interval leucine 6 to glycine 133. Residue glutamate 46 participates in Mg(2+) binding. Residue aspartate 50 is part of the active site. The Mg(2+) site is built by aspartate 119 and glutamate 122. Residue glutamate 122 is part of the active site. One can recognise a DRBM domain in the interval aspartate 160–glycine 229.

It belongs to the ribonuclease III family. As to quaternary structure, homodimer. It depends on Mg(2+) as a cofactor.

It is found in the cytoplasm. The enzyme catalyses Endonucleolytic cleavage to 5'-phosphomonoester.. Digests double-stranded RNA. Involved in the processing of primary rRNA transcript to yield the immediate precursors to the large and small rRNAs (23S and 16S). Processes some mRNAs, and tRNAs when they are encoded in the rRNA operon. Processes pre-crRNA and tracrRNA of type II CRISPR loci if present in the organism. This chain is Ribonuclease 3, found in Clostridium beijerinckii (strain ATCC 51743 / NCIMB 8052) (Clostridium acetobutylicum).